The primary structure comprises 290 residues: Protease HtpX (290 aa).

Helical transmembrane passes span 12 to 32 and 42 to 62; these read IAVMVLISLVFSLFGFQGLLA and ALLVYSAVIGFSGSIISLLIS. His147 contributes to the Zn(2+) binding site. Glu148 is an active-site residue. His151 contributes to the Zn(2+) binding site. 2 helical membrane-spanning segments follow: residues 162 to 182 and 197 to 217; these read LIQGVLNTFVVFLSRVIGHVV and FWIVSIISQVILGILASMIVM. Glu224 provides a ligand contact to Zn(2+).

Belongs to the peptidase M48B family. Zn(2+) is required as a cofactor.

It localises to the cell inner membrane. The polypeptide is Protease HtpX (Pseudoalteromonas atlantica (strain T6c / ATCC BAA-1087)).